The primary structure comprises 190 residues: UPF0149 protein NT01EI_3357 (190 aa).

This sequence belongs to the UPF0149 family.

This chain is UPF0149 protein NT01EI_3357, found in Edwardsiella ictaluri (strain 93-146).